A 196-amino-acid polypeptide reads, in one-letter code: Peroxisomal membrane protein 2 (196 aa).

Residues 1 to 30 are Cytoplasmic-facing; the sequence is MAPAASKLRAEAGLGPLPRRALSQYLRLLR. The helical transmembrane segment at 31–51 threads the bilayer; that stretch reads LYPVLTKAATSGILSALGNFL. The Peroxisomal segment spans residues 52–76; it reads AQLIEKKQKKENCSQKLDVSGPLRY. The chain crosses the membrane as a helical span at residues 77–97; the sequence is AIYGFFFTGPLGHFFYLLMER. Over 98–115 the chain is Cytoplasmic; sequence WIPSEVPLAGIKRLLLDR. The chain crosses the membrane as a helical span at residues 116 to 136; the sequence is LLFAPAFLSLFFLVMNFLEGQ. The Peroxisomal portion of the chain corresponds to 137 to 174; the sequence is DTAAFAAKMKSGFWPALRMNWRVWTPVQFININYIPVQ. A helical transmembrane segment spans residues 175–196; that stretch reads FRVLFANLVALFWYAYLASLGK.

Belongs to the peroxisomal membrane protein PXMP2/4 family. As to quaternary structure, interacts with PEX19 and SIVA1.

The protein localises to the peroxisome membrane. Seems to be involved in pore-forming activity and may contribute to the unspecific permeability of the peroxisomal membrane. This is Peroxisomal membrane protein 2 (PXMP2) from Bos taurus (Bovine).